Here is a 544-residue protein sequence, read N- to C-terminus: Propane 2-monooxygenase, hydroxylase component large subunit (544 aa).

Fe cation is bound by residues Glu-97, Glu-127, His-130, Glu-192, Glu-226, and His-229.

It belongs to the TmoA/XamoA family. The propane 2-monooxygenase multicomponent enzyme system is composed of an electron transfer component and a monooxygenase component interacting with the effector protein PrmD. The electron transfer component is composed of a reductase (PrmB), and the monooxygenase component is formed by a large subunit (PrmA) and a small subunit (PrmC). Probably requires the presence of the chaperonin-like protein PrmG to ensure a productive folding, resulting of a soluble PrmA, which leads to the active form of PrmABCD. Fe(2+) serves as cofactor.

The catalysed reaction is propane + NADH + O2 + H(+) = propan-2-ol + NAD(+) + H2O. In terms of biological role, component of the propane 2-monooxygenase multicomponent enzyme system which is involved in the degradation of propane via the O2-dependent hydroxylation of propane. Also able to catalyze the oxidation the water contaminant N-nitrosodimethylamine (NDMA). The sequence is that of Propane 2-monooxygenase, hydroxylase component large subunit from Rhodococcus jostii (strain RHA1).